We begin with the raw amino-acid sequence, 712 residues long: Autophagy-related protein 13 (712 aa).

2 disordered regions span residues Ala-388 to Pro-443 and Gly-568 to Glu-611. Positions Ser-402–Gly-415 are enriched in low complexity. Positions Ser-412–His-420 are ATG17-binding. The segment covering Arg-424–Asn-439 has biased composition (basic and acidic residues). Residues Thr-441–Asp-500 are ATG1-binding. Residues Thr-576–Asp-585 are compositionally biased toward acidic residues.

Belongs to the ATG13 family. Fungi subfamily. In terms of assembly, hypophosphorylated form interacts with ATG1 to form the ATG1-ATG13 kinase complex. The ATG1-ATG13 complex interacts with the ATG17-ATG29-ATG31 complex through direct interaction with ATG17. Interacts with VAC8. Hyperphosphorylated under nutrient-rich conditions. Starvation and TOR inactivation results in ATG13 partial dephosphorylation leading to ATG1-binding. Dephosphorylation induces ATG17-binding.

The protein localises to the cytoplasm. It localises to the preautophagosomal structure. Its function is as follows. Activates the ATG1 kinase in a nutritional condition dependent manner through the TOR pathway, leading to autophagy. Involved in ATG9 and ATG23 cycling through the pre-autophagosomal structure. Also involved in cytoplasm to vacuole transport (Cvt) and more specifically in Cvt vesicle formation. Seems to play a role in the switching machinery regulating the conversion between the Cvt pathway and autophagy. Finally, ATG13 is also required for glycogen storage during stationary phase. This chain is Autophagy-related protein 13, found in Kluyveromyces marxianus (strain DMKU3-1042 / BCC 29191 / NBRC 104275) (Yeast).